Here is a 272-residue protein sequence, read N- to C-terminus: Shikimate dehydrogenase (NADP(+)) (272 aa).

Residues 14 to 16 and Thr-61 each bind shikimate; that span reads SKS. Catalysis depends on Lys-65, which acts as the Proton acceptor. Glu-77 provides a ligand contact to NADP(+). Shikimate is bound by residues Asn-86 and Asp-102. NADP(+) contacts are provided by residues 126 to 130, 149 to 154, and Met-213; these read GAGGA and NRTASR. Position 215 (Tyr-215) interacts with shikimate. An NADP(+)-binding site is contributed by Gly-237.

The protein belongs to the shikimate dehydrogenase family. As to quaternary structure, homodimer.

It catalyses the reaction shikimate + NADP(+) = 3-dehydroshikimate + NADPH + H(+). The protein operates within metabolic intermediate biosynthesis; chorismate biosynthesis; chorismate from D-erythrose 4-phosphate and phosphoenolpyruvate: step 4/7. Functionally, involved in the biosynthesis of the chorismate, which leads to the biosynthesis of aromatic amino acids. Catalyzes the reversible NADPH linked reduction of 3-dehydroshikimate (DHSA) to yield shikimate (SA). The sequence is that of Shikimate dehydrogenase (NADP(+)) from Citrobacter koseri (strain ATCC BAA-895 / CDC 4225-83 / SGSC4696).